The primary structure comprises 560 residues: Putative transport protein VP1232 (560 aa).

The next 5 helical transmembrane spans lie at 8–28 (LLDQNPILLIFVVLAIGLAIG), 37–57 (LGNSIGVLITSLIMGHLGFSF), 66–86 (FMLFIYCVGIEAGPNFFGIFF), 91–111 (HYFILSMTVLVAAVSLTYGLS), and 164–184 (VGYAMAYLIGLISMIMFAKLL). RCK C-terminal domains lie at 205–292 (LGNS…FRNG) and 293–376 (KEVF…KIGF). Transmembrane regions (helical) follow at residues 386-406 (LLAFCSFFILGIMFGLVTMTF), 409-429 (VSFSLGNAVGLLLSGITLGFL), 443-463 (ALNMVKDLGLMFFMVGIGLSA), 478-498 (VIGLAFIVSVVPVVIAYLVGA), 506-526 (ALLFGAIIGARTCAPAMDVVN), and 539-559 (AGTYAIANILMTLAGTILIIL).

Belongs to the AAE transporter (TC 2.A.81) family. YbjL subfamily.

It localises to the cell membrane. This Vibrio parahaemolyticus serotype O3:K6 (strain RIMD 2210633) protein is Putative transport protein VP1232.